The sequence spans 172 residues: Large ribosomal subunit protein uL10 (172 aa).

It belongs to the universal ribosomal protein uL10 family. As to quaternary structure, part of the ribosomal stalk of the 50S ribosomal subunit. The N-terminus interacts with L11 and the large rRNA to form the base of the stalk. The C-terminus forms an elongated spine to which L12 dimers bind in a sequential fashion forming a multimeric L10(L12)X complex.

Functionally, forms part of the ribosomal stalk, playing a central role in the interaction of the ribosome with GTP-bound translation factors. The chain is Large ribosomal subunit protein uL10 from Prosthecochloris aestuarii (strain DSM 271 / SK 413).